The chain runs to 137 residues: MDQTNLRRCLATYFGDEKNINHILKKTAGPDQMVQIYQILTTIENPSHSEQDNFRRAVTMVKQNQLGWGHPIFQPEQQKISEENDFITCPYEVSEGVLRCGKCDCTKILWFSKQTRSMDEPTTIFASCSNCKTRWTE.

The TFIIS-type zinc finger occupies 85-136; that stretch reads DFITCPYEVSEGVLRCGKCDCTKILWFSKQTRSMDEPTTIFASCSNCKTRWT. Zn(2+) is bound by residues cysteine 89, cysteine 103, cysteine 128, and cysteine 131.

Belongs to the IIV-6 349L family.

The polypeptide is Putative transcription elongation factor S-II-like protein 055R (Aedes vexans (Inland floodwater mosquito)).